A 132-amino-acid polypeptide reads, in one-letter code: Small ribosomal subunit protein uS8 (132 aa).

The protein belongs to the universal ribosomal protein uS8 family. Part of the 30S ribosomal subunit. Contacts proteins S5 and S12.

Its function is as follows. One of the primary rRNA binding proteins, it binds directly to 16S rRNA central domain where it helps coordinate assembly of the platform of the 30S subunit. This is Small ribosomal subunit protein uS8 from Rhizobium rhizogenes (strain K84 / ATCC BAA-868) (Agrobacterium radiobacter).